A 300-amino-acid chain; its full sequence is NADH-cytochrome b5 reductase 1 (300 aa).

The chain crosses the membrane as a helical span at residues 8–28; it reads PLVVFATVATIIISFVTLYFF. Residues 34 to 45 show a composition bias toward low complexity; the sequence is SSTTSSSSSSSS. The segment at 34 to 54 is disordered; the sequence is SSTTSSSSSSSSKSKKGSPAL. Residues 57–160 form the FAD-binding FR-type domain; sequence DKFQKFPLIS…RGPKGFFTYT (104 aa). FAD is bound by residues 140 to 155 and 166 to 198; these read AEKQ…GPKG and SLGL…KVHL.

Belongs to the flavoprotein pyridine nucleotide cytochrome reductase family. As to quaternary structure, monomer. Component of the 2-(3-amino-3-carboxypropyl)histidine synthase complex composed of DPH1, DPH2, DPH3 and a NADH-dependent reductase, predominantly CBR1. FAD serves as cofactor.

The protein localises to the mitochondrion outer membrane. It catalyses the reaction 2 Fe(III)-[cytochrome b5] + NADH = 2 Fe(II)-[cytochrome b5] + NAD(+) + H(+). The catalysed reaction is 2 Fe(3+)-[Dph3] + NADH = 2 Fe(2+)-[Dph3] + NAD(+) + H(+). It participates in protein modification; peptidyl-diphthamide biosynthesis. Functionally, NADH-dependent reductase for DPH3 and cytochrome b5. Required for the first step of diphthamide biosynthesis, a post-translational modification of histidine which occurs in elongation factor 2. DPH1 and DPH2 transfer a 3-amino-3-carboxypropyl (ACP) group from S-adenosyl-L-methionine (SAM) to a histidine residue, the reaction is assisted by a reduction system comprising DPH3 and a NADH-dependent reductase, predominantly CBR1. By reducing DPH3, also involved in the formation of the tRNA wobble base modification mcm5s 2U (5-methoxycarbonylmethyl-2-thiouridine), mediated by the elongator complex. The cytochrome b5/NADH cytochrome b5 reductase electron transfer system supports the catalytic activity of several sterol biosynthetic enzymes. This chain is NADH-cytochrome b5 reductase 1 (CBR1), found in Lodderomyces elongisporus (strain ATCC 11503 / CBS 2605 / JCM 1781 / NBRC 1676 / NRRL YB-4239) (Yeast).